The primary structure comprises 212 residues: Uracil phosphoribosyltransferase (212 aa).

5-phospho-alpha-D-ribose 1-diphosphate is bound by residues Arg-78, Arg-103, and Asp-130 to Ser-138. Uracil-binding positions include Ile-193 and Gly-198–Ala-200. Residue Asp-199 participates in 5-phospho-alpha-D-ribose 1-diphosphate binding.

Belongs to the UPRTase family. It depends on Mg(2+) as a cofactor.

The catalysed reaction is UMP + diphosphate = 5-phospho-alpha-D-ribose 1-diphosphate + uracil. Its pathway is pyrimidine metabolism; UMP biosynthesis via salvage pathway; UMP from uracil: step 1/1. Allosterically activated by GTP. In terms of biological role, catalyzes the conversion of uracil and 5-phospho-alpha-D-ribose 1-diphosphate (PRPP) to UMP and diphosphate. The polypeptide is Uracil phosphoribosyltransferase (Pseudomonas entomophila (strain L48)).